A 296-amino-acid polypeptide reads, in one-letter code: Cell division protein DivIB (296 aa).

At 1-25 the chain is on the cytoplasmic side; that stretch reads MMEDKIIHTPRFDEQRRMRRKKRQR. A helical membrane pass occupies residues 26 to 46; sequence LQLFIFLSIVAIVSLILIYMF. At 47-296 the chain is on the extracellular side; it reads TSISYVKKIS…KELNQVKKNS (250 aa). Residues 50-118 form the POTRA domain; sequence SYVKKISVND…NTVSINVEEY (69 aa).

This sequence belongs to the FtsQ/DivIB family. DivIB subfamily.

It is found in the cell membrane. Its function is as follows. Cell division protein that may be involved in stabilizing or promoting the assembly of the division complex. This chain is Cell division protein DivIB, found in Macrococcus caseolyticus (strain JCSC5402) (Macrococcoides caseolyticum).